The sequence spans 725 residues: Probable alpha-galactosidase G (725 aa).

N-linked (GlcNAc...) asparagine glycosylation is present at Asn407. Asp484 (nucleophile) is an active-site residue. N-linked (GlcNAc...) asparagine glycosylation occurs at Asn490. Asp546 functions as the Proton donor in the catalytic mechanism. Asn672 is a glycosylation site (N-linked (GlcNAc...) asparagine).

This sequence belongs to the glycosyl hydrolase 36 family. Homotetramer. Mg(2+) is required as a cofactor. NAD(+) serves as cofactor.

Its subcellular location is the secreted. The enzyme catalyses Hydrolysis of terminal, non-reducing alpha-D-galactose residues in alpha-D-galactosides, including galactose oligosaccharides, galactomannans and galactolipids.. Functionally, hydrolyzes a variety of simple alpha-D-galactoside as well as more complex molecules such as oligosaccharides and polysaccharides. The chain is Probable alpha-galactosidase G (aglG) from Aspergillus terreus (strain NIH 2624 / FGSC A1156).